Reading from the N-terminus, the 101-residue chain is Small ribosomal subunit protein uS14 (101 aa).

It belongs to the universal ribosomal protein uS14 family. As to quaternary structure, part of the 30S ribosomal subunit. Contacts proteins S3 and S10.

In terms of biological role, binds 16S rRNA, required for the assembly of 30S particles and may also be responsible for determining the conformation of the 16S rRNA at the A site. The sequence is that of Small ribosomal subunit protein uS14 from Brucella abortus (strain 2308).